Consider the following 132-residue polypeptide: Acid shock protein (132 aa).

A signal peptide spans 1-21 (MKKVLALIVAATMGLSSVAFA). Positions 22–69 (AETTAAATAAPAATSTTAAPAVEKAAPAKATHHKKHKATKQTTEQKAQ) are excised as a propeptide. A compositionally biased stretch (low complexity) spans 30 to 50 (AAPAATSTTAAPAVEKAAPAK). The tract at residues 30-132 (AAPAATSTTA…AKKSATAPAA (103 aa)) is disordered. Over residues 51–60 (ATHHKKHKAT) the composition is skewed to basic residues. The span at 61–99 (KQTTEQKAQAAKKAVKKAPAQKAQAAKKAVKKAPVQKAQ) shows a compositional bias: low complexity. Residues 100–124 (AAKKHVKKAPAQKAQAAKKHHKTAK) are compositionally biased toward basic residues.

Belongs to the Asr family. In terms of processing, proteolytic processing gives rise to the active protein.

It is found in the periplasm. Its function is as follows. Required for growth and/or survival at acidic conditions. This is Acid shock protein from Yersinia enterocolitica serotype O:8 / biotype 1B (strain NCTC 13174 / 8081).